A 755-amino-acid chain; its full sequence is Histone-lysine N-methyltransferase, H3 lysine-9 specific SUVH8 (755 aa).

2 disordered regions span residues 62 to 98 and 111 to 243; these read YDRD…PPQT and YDRD…KMVI. 2 stretches are compositionally biased toward basic and acidic residues: residues 73–86 and 122–135; these read VHRE…EEAH and IDRE…EDAH. Positions 174 to 186 form a DNA-binding region, a.T hook; sequence KRGRGRPKGSKNG. Basic residues predominate over residues 174–193; the sequence is KRGRGRPKGSKNGSRKPKKP. Over residues 197–207 the composition is skewed to polar residues; the sequence is DNNSTDASAGP. The span at 212 to 231 shows a compositional bias: basic residues; sequence GKRRCGRPKGLKNRSRKPKK. The YDG domain occupies 310–448; it reads GPIPGVQVGD…FKEYRFKLLR (139 aa). In terms of domain architecture, Pre-SET spans 528-578; sequence QSLVQSYIHQNCTCILKNCGQLPYHDNILVCRKPLIYECGGSCPTRMVETG. One can recognise an SET domain in the interval 581 to 723; the sequence is LHLEVFKTSN…PMTELTYDYG (143 aa). S-adenosyl-L-methionine contacts are provided by residues 591–593, D624, Y626, R676, and 679–680; these read CGW and NH. The Zn(2+) site is built by C682, C743, C745, and C750. Residues 739–755 enclose the Post-SET domain; that stretch reads GKKICLCGSVKCRGSFG.

Belongs to the class V-like SAM-binding methyltransferase superfamily. Histone-lysine methyltransferase family. Suvar3-9 subfamily.

The protein resides in the nucleus. It localises to the chromosome. Its subcellular location is the centromere. It carries out the reaction N(6)-methyl-L-lysyl(9)-[histone H3] + S-adenosyl-L-methionine = N(6),N(6)-dimethyl-L-lysyl(9)-[histone H3] + S-adenosyl-L-homocysteine + H(+). The catalysed reaction is L-lysyl(9)-[histone H3] + S-adenosyl-L-methionine = N(6)-methyl-L-lysyl(9)-[histone H3] + S-adenosyl-L-homocysteine + H(+). In terms of biological role, histone methyltransferase. Methylates 'Lys-9' of histone H3. H3 'Lys-9' methylation represents a specific tag for epigenetic transcriptional repression. In Arabidopsis thaliana (Mouse-ear cress), this protein is Histone-lysine N-methyltransferase, H3 lysine-9 specific SUVH8 (SUVH8).